The following is a 371-amino-acid chain: 3-isopropylmalate dehydrogenase (371 aa).

Positions 104, 114, 142, and 232 each coordinate substrate. 3 residues coordinate Mg(2+): Asp232, Asp256, and Asp260. Position 290–302 (290–302 (GSAPDIAGQDKAN)) interacts with NAD(+).

The protein belongs to the isocitrate and isopropylmalate dehydrogenases family. LeuB type 1 subfamily. Homodimer. Requires Mg(2+) as cofactor. Mn(2+) serves as cofactor.

The protein resides in the cytoplasm. It catalyses the reaction (2R,3S)-3-isopropylmalate + NAD(+) = 4-methyl-2-oxopentanoate + CO2 + NADH. The protein operates within amino-acid biosynthesis; L-leucine biosynthesis; L-leucine from 3-methyl-2-oxobutanoate: step 3/4. Functionally, catalyzes the oxidation of 3-carboxy-2-hydroxy-4-methylpentanoate (3-isopropylmalate) to 3-carboxy-4-methyl-2-oxopentanoate. The product decarboxylates to 4-methyl-2 oxopentanoate. The chain is 3-isopropylmalate dehydrogenase from Synechococcus sp. (strain JA-2-3B'a(2-13)) (Cyanobacteria bacterium Yellowstone B-Prime).